A 145-amino-acid polypeptide reads, in one-letter code: Cystatin-F (145 aa).

Residues 1–19 form the signal peptide; the sequence is MRAAGTLLAFCCLVLSTTG. N-linked (GlcNAc...) asparagine glycosylation is present at Asn62. Residues 81 to 85 carry the Secondary area of contact motif; that stretch reads QIVKG. Cys99 and Cys110 are joined by a disulfide. A glycan (N-linked (GlcNAc...) asparagine) is linked at Asn115. A disulfide bridge links Cys124 with Cys144.

The protein belongs to the cystatin family. In terms of assembly, homodimer; disulfide-linked. Primarily expressed in peripheral blood cells and spleen.

The protein localises to the secreted. The protein resides in the cytoplasm. Its function is as follows. Inhibits papain and cathepsin L but with affinities lower than other cystatins. May play a role in immune regulation through inhibition of a unique target in the hematopoietic system. This is Cystatin-F (CST7) from Homo sapiens (Human).